A 971-amino-acid chain; its full sequence is Translation initiation factor IF-2 (971 aa).

Basic and acidic residues predominate over residues 49-63 (HLRKSHGATDGDKRK). Disordered regions lie at residues 49–85 (HLRKSHGATDGDKRKITLTRKHTSEIKQSDATGKART) and 99–386 (RDDV…PTEP). A compositionally biased stretch (low complexity) spans 105 to 114 (GAEQGQAQVA). A compositionally biased stretch (basic and acidic residues) spans 121–181 (ELKRREEEAR…EEEAAAKRAA (61 aa)). Residues 182–200 (AEAAAAQQAAAQQAAAEQE) show a composition bias toward low complexity. Residues 209–260 (DEARAAAERAAQREAAKKAEDAAREAADKARAEQEEISKRRAAAEAEARAIR) show a composition bias toward basic and acidic residues. Positions 303-325 (ARPAVKKPAGAAAPATTQAPAGA) are enriched in low complexity. Gly residues predominate over residues 355–368 (SSGGVDRGWRGGPK). The region spanning 471 to 640 (PRPPVVTVMG…LLQAEVLELK (170 aa)) is the tr-type G domain. Residues 480-487 (GHVDHGKT) form a G1 region. A GTP-binding site is contributed by 480–487 (GHVDHGKT). The segment at 505–509 (GITQH) is G2. The segment at 526–529 (DTPG) is G3. GTP contacts are provided by residues 526–530 (DTPGH) and 580–583 (NKID). A G4 region spans residues 580 to 583 (NKID). The interval 616–618 (SAK) is G5.

Belongs to the TRAFAC class translation factor GTPase superfamily. Classic translation factor GTPase family. IF-2 subfamily.

The protein localises to the cytoplasm. One of the essential components for the initiation of protein synthesis. Protects formylmethionyl-tRNA from spontaneous hydrolysis and promotes its binding to the 30S ribosomal subunits. Also involved in the hydrolysis of GTP during the formation of the 70S ribosomal complex. The chain is Translation initiation factor IF-2 from Burkholderia cenocepacia (strain ATCC BAA-245 / DSM 16553 / LMG 16656 / NCTC 13227 / J2315 / CF5610) (Burkholderia cepacia (strain J2315)).